The chain runs to 2621 residues: Nonribosomal peptide synthetase dtpA (2621 aa).

The segment at 446–844 (CMEQPNAEAI…GRKDQQVKIR (399 aa)) is adenylation 1. The region spanning 978-1054 (QPYTQVEETL…EVALYSRALS (77 aa)) is the Carrier 1 domain. Serine 1015 carries the post-translational modification O-(pantetheine 4'-phosphoryl)serine. Positions 1095–1506 (EDIYPCTALQ…LNQLELAGPQ (412 aa)) are condensation 1. Residues 1534–1930 (SRTQPGASAI…GRRDNQVKLR (397 aa)) form an adenylation 2 region. The Carrier 2 domain occupies 2071–2147 (QPSTTQEALV…LFCTNASTSI (77 aa)). Serine 2108 is modified (O-(pantetheine 4'-phosphoryl)serine). Residues 2220 to 2618 (AIFKLHGSKV…HSARPIASID (399 aa)) form a condensation 2 region.

It belongs to the NRP synthetase family.

It functions in the pathway alkaloid biosynthesis. Nonribosomal peptide synthetase; part of the gene cluster that mediates the biosynthesis of the dimeric diketopiperazine alkaloid ditryptophenaline. The nonribosomal peptide synthase dtpA accepts L-tryptophan and L-phenylalanine as its substrates and forms the phenylalanyl-tryptophanyl cyclic dipeptide product cyclophenylalanyltryptophenyl. The N-methyltransferase dtpB is responsible for the N-methylation of cyclophenylalanyltryptophenyl to yield cyclo-N-methylphenylalanyltryptophenyl. The cytochrome P450 monooxygenase is responsible not only for pyrroloindole ring formation but also for concurrent dimerization of N-methylphenylalanyltryptophanyl diketopiperazine monomers into a homodimeric product. The protein is Nonribosomal peptide synthetase dtpA of Aspergillus flavus (strain ATCC 200026 / FGSC A1120 / IAM 13836 / NRRL 3357 / JCM 12722 / SRRC 167).